Here is a 187-residue protein sequence, read N- to C-terminus: Crossover junction endodeoxyribonuclease RuvC (187 aa).

Catalysis depends on residues D7, E67, and D140. Residues D7, E67, and D140 each contribute to the Mg(2+) site.

This sequence belongs to the RuvC family. Homodimer which binds Holliday junction (HJ) DNA. The HJ becomes 2-fold symmetrical on binding to RuvC with unstacked arms; it has a different conformation from HJ DNA in complex with RuvA. In the full resolvosome a probable DNA-RuvA(4)-RuvB(12)-RuvC(2) complex forms which resolves the HJ. Mg(2+) serves as cofactor.

The protein resides in the cytoplasm. The catalysed reaction is Endonucleolytic cleavage at a junction such as a reciprocal single-stranded crossover between two homologous DNA duplexes (Holliday junction).. The RuvA-RuvB-RuvC complex processes Holliday junction (HJ) DNA during genetic recombination and DNA repair. Endonuclease that resolves HJ intermediates. Cleaves cruciform DNA by making single-stranded nicks across the HJ at symmetrical positions within the homologous arms, yielding a 5'-phosphate and a 3'-hydroxyl group; requires a central core of homology in the junction. The consensus cleavage sequence is 5'-(A/T)TT(C/G)-3'. Cleavage occurs on the 3'-side of the TT dinucleotide at the point of strand exchange. HJ branch migration catalyzed by RuvA-RuvB allows RuvC to scan DNA until it finds its consensus sequence, where it cleaves and resolves the cruciform DNA. In Prosthecochloris aestuarii (strain DSM 271 / SK 413), this protein is Crossover junction endodeoxyribonuclease RuvC.